Here is a 221-residue protein sequence, read N- to C-terminus: Small ribosomal subunit protein uS3c (221 aa).

In terms of domain architecture, KH type-2 spans 43–121 (IQNYIQKNMR…KLKIAITKIA (79 aa)).

The protein belongs to the universal ribosomal protein uS3 family. As to quaternary structure, part of the 30S ribosomal subunit.

The protein resides in the plastid. It localises to the chloroplast. The chain is Small ribosomal subunit protein uS3c (rps3) from Jasminum nudiflorum (Winter jasmine).